The following is a 430-amino-acid chain: Adenylosuccinate synthetase (430 aa).

GTP-binding positions include 13–19 (GDEGKGK) and 41–43 (GHT). D14 acts as the Proton acceptor in catalysis. Positions 14 and 41 each coordinate Mg(2+). IMP-binding positions include 14–17 (DEGK), 39–42 (NAGH), T130, R144, Q225, T240, and R304. Catalysis depends on H42, which acts as the Proton donor. Position 300–306 (300–306 (STTGRAR)) interacts with substrate. GTP-binding positions include R306, 332–334 (KLD), and 414–416 (STG).

This sequence belongs to the adenylosuccinate synthetase family. As to quaternary structure, homodimer. The cofactor is Mg(2+).

The protein resides in the cytoplasm. It carries out the reaction IMP + L-aspartate + GTP = N(6)-(1,2-dicarboxyethyl)-AMP + GDP + phosphate + 2 H(+). It participates in purine metabolism; AMP biosynthesis via de novo pathway; AMP from IMP: step 1/2. Its function is as follows. Plays an important role in the de novo pathway of purine nucleotide biosynthesis. Catalyzes the first committed step in the biosynthesis of AMP from IMP. This chain is Adenylosuccinate synthetase, found in Pseudomonas entomophila (strain L48).